Reading from the N-terminus, the 745-residue chain is Phosphoribosylformylglycinamidine synthase subunit PurL (745 aa).

Residue His-41 is part of the active site. 2 residues coordinate ATP: Tyr-44 and Lys-83. Glu-85 lines the Mg(2+) pocket. Residues 86 to 89 and Arg-108 contribute to the substrate site; that span reads SHNH. Residue His-87 is the Proton acceptor of the active site. Residue Asp-109 participates in Mg(2+) binding. Position 232 (Gln-232) interacts with substrate. Asp-260 lines the Mg(2+) pocket. 304–306 contributes to the substrate binding site; that stretch reads ESQ. Positions 494 and 531 each coordinate ATP. Asn-532 is a binding site for Mg(2+). Ser-534 is a substrate binding site.

This sequence belongs to the FGAMS family. Monomer. Part of the FGAM synthase complex composed of 1 PurL, 1 PurQ and 2 PurS subunits.

The protein localises to the cytoplasm. The catalysed reaction is N(2)-formyl-N(1)-(5-phospho-beta-D-ribosyl)glycinamide + L-glutamine + ATP + H2O = 2-formamido-N(1)-(5-O-phospho-beta-D-ribosyl)acetamidine + L-glutamate + ADP + phosphate + H(+). It functions in the pathway purine metabolism; IMP biosynthesis via de novo pathway; 5-amino-1-(5-phospho-D-ribosyl)imidazole from N(2)-formyl-N(1)-(5-phospho-D-ribosyl)glycinamide: step 1/2. Part of the phosphoribosylformylglycinamidine synthase complex involved in the purines biosynthetic pathway. Catalyzes the ATP-dependent conversion of formylglycinamide ribonucleotide (FGAR) and glutamine to yield formylglycinamidine ribonucleotide (FGAM) and glutamate. The FGAM synthase complex is composed of three subunits. PurQ produces an ammonia molecule by converting glutamine to glutamate. PurL transfers the ammonia molecule to FGAR to form FGAM in an ATP-dependent manner. PurS interacts with PurQ and PurL and is thought to assist in the transfer of the ammonia molecule from PurQ to PurL. This Aquifex aeolicus (strain VF5) protein is Phosphoribosylformylglycinamidine synthase subunit PurL.